The primary structure comprises 188 residues: dCTP deaminase (188 aa).

DCTP-binding positions include 111–116 (KSTYAR), 135–137 (TLE), Q156, Y170, K179, and Q180. E137 acts as the Proton donor/acceptor in catalysis.

It belongs to the dCTP deaminase family. Homotrimer.

It catalyses the reaction dCTP + H2O + H(+) = dUTP + NH4(+). It functions in the pathway pyrimidine metabolism; dUMP biosynthesis; dUMP from dCTP (dUTP route): step 1/2. In terms of biological role, catalyzes the deamination of dCTP to dUTP. The chain is dCTP deaminase from Rickettsia akari (strain Hartford).